Reading from the N-terminus, the 534-residue chain is 5,6-dihydroxyindole-2-carboxylic acid oxidase (534 aa).

The N-terminal stretch at 1–23 (MLGPATFLPLTAALLLLIPGGRA) is a signal peptide. At 24-477 (QFPRQCVTPE…WPSRALNFTE (454 aa)) the chain is on the lumenal, melanosome side. Cystine bridges form between Cys29–Cys40, Cys41–Cys65, Cys56–Cys99, Cys101–Cys110, and Cys113–Cys122. N-linked (GlcNAc...) asparagine glycosylation is found at Asn96 and Asn104. N-linked (GlcNAc...) asparagine glycosylation is found at Asn175 and Asn181. Residues His192, His215, and His224 each contribute to the Zn(2+) site. Disulfide bonds link Cys258–Cys261 and Cys290–Cys303. N-linked (GlcNAc...) asparagine glycans are attached at residues Asn304 and Asn350. 2 residues coordinate Zn(2+): His377 and His381. N-linked (GlcNAc...) asparagine glycosylation occurs at Asn385. His404 serves as a coordination point for Zn(2+). A helical transmembrane segment spans residues 478-501 (IITIAVVAALVLVAVIFAAASCAV). The Cytoplasmic segment spans residues 502 to 534 (HRSRKDDVHQPLLGEQYPRYSEEYERDASQSAV).

This sequence belongs to the tyrosinase family. Cu(2+) serves as cofactor. It depends on Zn(2+) as a cofactor.

It is found in the melanosome membrane. The enzyme catalyses 2 5,6-dihydroxyindole-2-carboxylate + O2 = 2 indole-5,6-quinone-2-carboxylate + 2 H2O. Its pathway is pigment biosynthesis; melanin biosynthesis. Plays a role in melanin biosynthesis. Catalyzes the oxidation of 5,6-dihydroxyindole-2-carboxylic acid (DHICA) into indole-5,6-quinone-2-carboxylic acid. May regulate or influence the type of melanin synthesized. Also to a lower extent, capable of hydroxylating tyrosine and producing melanin. The polypeptide is 5,6-dihydroxyindole-2-carboxylic acid oxidase (TYRP1) (Ambystoma mexicanum (Axolotl)).